A 1094-amino-acid polypeptide reads, in one-letter code: Probable arabinosyltransferase C (1094 aa).

A run of 13 helical transmembrane segments spans residues 28–50, 232–251, 264–286, 341–360, 373–392, 431–453, 466–488, 530–552, 565–582, 586–608, 620–642, 657–679, and 700–722; these read IARYVAVVAGLLGAVLAIATPLL, AAMILGVALTGAALVALHIL, PARWWSTGGLDTLVIAVLVWWHF, SIWMRLPTLAMALTCWWVIS, TSRAAAWTAAGMFLAVWLPL, IGALTLFSGPTGIASIGALLVAI, RFGVLPLVAPILAAATVTAIPIF, SIARRFAVLALVLALAVSVAMSL, SRRIIGITIISFLAMMFT, WTHHFGVFAGLAGSLGALAAVAV, TVFAAVVVFVLALSFASVNGWWY, WRWSLTTALLELTVLVLLLAAWF, and LAGIVQSPLAIATWLLVLFEVVS. Residues 817–831 show a composition bias toward low complexity; sequence GSEPGTEGGTTAAPG. A disordered region spans residues 817–836; the sequence is GSEPGTEGGTTAAPGINGSR.

The protein belongs to the emb family.

The protein resides in the cell membrane. In terms of biological role, arabinosyl transferase responsible for the polymerization of arabinose into the arabinan of arabinogalactan. The polypeptide is Probable arabinosyltransferase C (embC) (Mycobacterium tuberculosis (strain ATCC 25618 / H37Rv)).